The following is a 590-amino-acid chain: Leucine-rich repeat transmembrane neuronal protein 4 (590 aa).

A signal peptide spans 1–30 (MGFRLITQLKGMSVLLVLFPTLLLVMLTGA). Residues 31–59 (QRACPKNCRCDGKIVYCESHAFADIPENI) form the LRRNT domain. Over 31–424 (QRACPKNCRC…HEYEHVSFHK (394 aa)) the chain is Extracellular. The N-linked (GlcNAc...) asparagine glycan is linked to N58. LRR repeat units lie at residues 60–83 (SGGS…QFAG), 84–107 (LNQL…AFQG), 108–131 (IRRL…TFHP), 132–155 (VPNL…QFKG), 157–179 (RKLI…VFQD), 180–203 (CRNL…AFAG), 205–227 (LKLK…HFPR), 228–251 (LFNL…LTWT), 252–275 (WSSL…TFKC), and 276–299 (LPNL…TVNA). Residue N126 is glycosylated (N-linked (GlcNAc...) asparagine). The N-linked (GlcNAc...) asparagine glycan is linked to N291. The LRRCT domain occupies 311 to 362 (NMWECSRSICPLFYWLKNFKGNKESTMICAGPKHIQGEKVSDAVETYNICSD). Residues 425–445 (IIAGSVALFLSVAMILLVIYV) traverse the membrane as a helical segment. The Cytoplasmic segment spans residues 446-590 (SWKRYPASMK…PAIYLERITN (145 aa)).

It belongs to the LRRTM family. In terms of assembly, peripherally associated with AMPAR complex. AMPAR complex consists of an inner core made of 4 pore-forming GluA/GRIA proteins (GRIA1, GRIA2, GRIA3 and GRIA4) and 4 major auxiliary subunits arranged in a twofold symmetry. One of the two pairs of distinct binding sites is occupied either by CNIH2, CNIH3 or CACNG2, CACNG3. The other harbors CACNG2, CACNG3, CACNG4, CACNG8 or GSG1L. This inner core of AMPAR complex is complemented by outer core constituents binding directly to the GluA/GRIA proteins at sites distinct from the interaction sites of the inner core constituents. Outer core constituents include at least PRRT1, PRRT2, CKAMP44/SHISA9, FRRS1L and NRN1. The proteins of the inner and outer core serve as a platform for other, more peripherally associated AMPAR constituents, including LRRTM4. Alone or in combination, these auxiliary subunits control the gating and pharmacology of the AMPAR complex and profoundly impact their biogenesis and protein processing. In terms of tissue distribution, expressed in the brain (at protein level).

It is found in the cell membrane. It localises to the postsynaptic cell membrane. In terms of biological role, may play a role in the development and maintenance of the nervous system. Exhibits strong synaptogenic activity, restricted to excitatory presynaptic differentiation. This Rattus norvegicus (Rat) protein is Leucine-rich repeat transmembrane neuronal protein 4 (Lrrtm4).